Consider the following 309-residue polypeptide: Tumor necrosis factor ligand superfamily member 13B (309 aa).

Residues 1–47 (MDESAKTLPPPCLCFCSEKGEDMKVGYDPITPQKEEGAWFGICRDGR) are Cytoplasmic-facing. The chain crosses the membrane as a helical; Signal-anchor for type II membrane protein span at residues 48–68 (LLAATLLLALLSSSFTAMSLY). The Extracellular segment spans residues 69 to 309 (QLAALQADLM…DTFFGALKLL (241 aa)). The interval 110–140 (PAAPRPHNSSRGHRNRRAFQGPEETEQDVDL) is disordered. Residues asparagine 117 and asparagine 266 are each glycosylated (N-linked (GlcNAc...) asparagine). Residues 117–126 (NSSRGHRNRR) are compositionally biased toward basic residues. The region spanning 169 to 308 (DCLQLIADSD…DDTFFGALKL (140 aa)) is the THD domain. Cysteine 256 and cysteine 269 are disulfide-bonded.

This sequence belongs to the tumor necrosis factor family. Homotrimer. Isoform 2 heteromultimerizes with isoform 1, probably limiting the amount of functional isoform 1 on the cell surface. In terms of processing, the soluble form derives from the membrane form by proteolytic processing. Isoform 2 is not efficiently shed from the membrane unlike isoform 1. As to expression, isoform 2 is expressed in many myeloid cell lines.

It is found in the cell membrane. It localises to the secreted. In terms of biological role, cytokine that binds to TNFRSF13B/TACI and TNFRSF17/BCMA. TNFSF13/APRIL binds to the same 2 receptors. Together, they form a 2 ligands -2 receptors pathway involved in the stimulation of B- and T-cell function and the regulation of humoral immunity. A third B-cell specific BAFF-receptor (BAFFR/BR3) promotes the survival of mature B-cells and the B-cell response. Functionally, isoform 2 seems to inhibit isoform 1 secretion and bioactivity. This is Tumor necrosis factor ligand superfamily member 13B (Tnfsf13b) from Mus musculus (Mouse).